The following is a 100-amino-acid chain: NADH-quinone oxidoreductase subunit K 2 (100 aa).

3 helical membrane passes run 4 to 24 (LWWS…GVLL), 28 to 48 (ILIV…NFIA), and 60 to 80 (IFAI…LGIL).

It belongs to the complex I subunit 4L family. In terms of assembly, NDH-1 is composed of 14 different subunits. Subunits NuoA, H, J, K, L, M, N constitute the membrane sector of the complex.

Its subcellular location is the cell inner membrane. The catalysed reaction is a quinone + NADH + 5 H(+)(in) = a quinol + NAD(+) + 4 H(+)(out). Its function is as follows. NDH-1 shuttles electrons from NADH, via FMN and iron-sulfur (Fe-S) centers, to quinones in the respiratory chain. The immediate electron acceptor for the enzyme in this species is believed to be ubiquinone. Couples the redox reaction to proton translocation (for every two electrons transferred, four hydrogen ions are translocated across the cytoplasmic membrane), and thus conserves the redox energy in a proton gradient. This chain is NADH-quinone oxidoreductase subunit K 2, found in Rhizobium meliloti (strain 1021) (Ensifer meliloti).